Reading from the N-terminus, the 163-residue chain is MEKLILGLDPGLAVLGFGLIKCIYNSKTEKIDSTSLVDFGVIKTTKKQEMGQRLVTIYEDLHTILNNFKPDLAATEKLFFYRMGNTILVAQARGILILALAQNEIPLIEFTPAQIKQAVTGYGNADKYDVQQAVARELNLEEIPKPDDAADALAVALTASWLN.

Residues Asp-9, Glu-76, and Asp-148 contribute to the active site. Residues Asp-9, Glu-76, and Asp-148 each contribute to the Mg(2+) site.

The protein belongs to the RuvC family. Homodimer which binds Holliday junction (HJ) DNA. The HJ becomes 2-fold symmetrical on binding to RuvC with unstacked arms; it has a different conformation from HJ DNA in complex with RuvA. In the full resolvosome a probable DNA-RuvA(4)-RuvB(12)-RuvC(2) complex forms which resolves the HJ. The cofactor is Mg(2+).

It is found in the cytoplasm. The catalysed reaction is Endonucleolytic cleavage at a junction such as a reciprocal single-stranded crossover between two homologous DNA duplexes (Holliday junction).. In terms of biological role, the RuvA-RuvB-RuvC complex processes Holliday junction (HJ) DNA during genetic recombination and DNA repair. Endonuclease that resolves HJ intermediates. Cleaves cruciform DNA by making single-stranded nicks across the HJ at symmetrical positions within the homologous arms, yielding a 5'-phosphate and a 3'-hydroxyl group; requires a central core of homology in the junction. The consensus cleavage sequence is 5'-(A/T)TT(C/G)-3'. Cleavage occurs on the 3'-side of the TT dinucleotide at the point of strand exchange. HJ branch migration catalyzed by RuvA-RuvB allows RuvC to scan DNA until it finds its consensus sequence, where it cleaves and resolves the cruciform DNA. In Trichodesmium erythraeum (strain IMS101), this protein is Crossover junction endodeoxyribonuclease RuvC.